Reading from the N-terminus, the 593-residue chain is Aspartate--tRNA ligase (593 aa).

E180 is a binding site for L-aspartate. Residues 204–207 (QIFK) are aspartate. R226 lines the L-aspartate pocket. Residues 226–228 (RDE) and Q235 contribute to the ATP site. H453 contacts L-aspartate. E487 provides a ligand contact to ATP. An L-aspartate-binding site is contributed by R494. ATP is bound at residue 539–542 (GLDR).

Belongs to the class-II aminoacyl-tRNA synthetase family. Type 1 subfamily. In terms of assembly, homodimer.

The protein localises to the cytoplasm. The catalysed reaction is tRNA(Asp) + L-aspartate + ATP = L-aspartyl-tRNA(Asp) + AMP + diphosphate. Its function is as follows. Catalyzes the attachment of L-aspartate to tRNA(Asp) in a two-step reaction: L-aspartate is first activated by ATP to form Asp-AMP and then transferred to the acceptor end of tRNA(Asp). This is Aspartate--tRNA ligase from Clostridium botulinum (strain 657 / Type Ba4).